The following is a 211-amino-acid chain: LexA repressor (211 aa).

The segment at residues 27 to 47 is a DNA-binding region (H-T-H motif); that stretch reads QTEIARAFGFKGVRAVQHHLD. Residues Ser131 and Lys168 each act as for autocatalytic cleavage activity in the active site.

This sequence belongs to the peptidase S24 family. As to quaternary structure, homodimer.

It catalyses the reaction Hydrolysis of Ala-|-Gly bond in repressor LexA.. Represses a number of genes involved in the response to DNA damage (SOS response), including recA and lexA. In the presence of single-stranded DNA, RecA interacts with LexA causing an autocatalytic cleavage which disrupts the DNA-binding part of LexA, leading to derepression of the SOS regulon and eventually DNA repair. This Xylella fastidiosa (strain 9a5c) protein is LexA repressor.